A 408-amino-acid chain; its full sequence is Argininosuccinate synthase (408 aa).

Residues 11–19 (AYSGGLDTS) and alanine 38 contribute to the ATP site. Positions 91 and 96 each coordinate L-citrulline. Glycine 121 provides a ligand contact to ATP. L-aspartate is bound by residues threonine 123, asparagine 127, and aspartate 128. Asparagine 127 lines the L-citrulline pocket. Residues arginine 131, serine 182, serine 191, glutamate 267, and tyrosine 279 each coordinate L-citrulline.

The protein belongs to the argininosuccinate synthase family. Type 1 subfamily. Homotetramer.

It localises to the cytoplasm. The enzyme catalyses L-citrulline + L-aspartate + ATP = 2-(N(omega)-L-arginino)succinate + AMP + diphosphate + H(+). The protein operates within amino-acid biosynthesis; L-arginine biosynthesis; L-arginine from L-ornithine and carbamoyl phosphate: step 2/3. The protein is Argininosuccinate synthase of Azorhizobium caulinodans (strain ATCC 43989 / DSM 5975 / JCM 20966 / LMG 6465 / NBRC 14845 / NCIMB 13405 / ORS 571).